An 844-amino-acid chain; its full sequence is Lysine-specific histone demethylase 1 homolog 1 (844 aa).

Over residues 1 to 18 (MSTETKETRPETKPEDLG) the composition is skewed to basic and acidic residues. The segment at 1–131 (MSTETKETRP…PGPRARKRRR (131 aa)) is disordered. A compositionally biased stretch (acidic residues) spans 26–40 (PGEEPLGELIADDVN). Polar residues-rich tracts occupy residues 46–62 (ASATETDFSLSPSQSEQ) and 107–118 (DLVTEQQSQNPN). Residues 154–255 (GKEVDSEALI…FGLAPVIKEA (102 aa)) form the SWIRM domain. Residues Glu-295, Arg-297, and Arg-303 each coordinate FAD. The short motif at 516-523 (LKKGSIEF) is the Nuclear localization signal element. Glu-679 lines the FAD pocket.

The protein belongs to the flavin monoamine oxidase family. As to quaternary structure, interacts with CZS. Interacts with OTU6/OTLD1. Requires FAD as cofactor. Expressed in the shoot and root apical regions of young seedlings. Expressed in cotyledons and inflorescences.

It is found in the nucleus. It localises to the cytoplasm. Probable histone demethylase that reduces the levels of histone H3 'Lys-4' methylation in chromatin of the floral repressor FLOWERING LOCUS C (FLC) and the sporophytically silenced floral repressor FWA. Seems to act in partial redundancy with FLOWERING LOCUS D (FLD) to repress FLC expression. Required for cytosine methylation of FWA. Controls primary seed dormancy by regulating DOG1 and abscisic acid signaling-related genes. In association with OTU6/OTLD1, involved in transcriptional gene repression via histone deubiquitination and demethylation. The polypeptide is Lysine-specific histone demethylase 1 homolog 1 (Arabidopsis thaliana (Mouse-ear cress)).